Consider the following 443-residue polypeptide: Protein SCAR (443 aa).

Residues 1-96 (MVLITRYLPS…DYHRNTSIDT (96 aa)) are interaction with brk1 and abiA. Positions 166-201 (VAEQQKLHEEARQRKRERREARLKKKGEKNEVEVKK) form a coiled coil. Disordered stretches follow at residues 176 to 197 (ARQRKRERREARLKKKGEKNEV) and 220 to 386 (INIE…RSDL). Positions 178 to 192 (QRKRERREARLKKKG) are enriched in basic residues. A compositionally biased stretch (polar residues) spans 221-252 (NIESPHTSSPQIQHQSNNTATPQHTTQHFGTN). Composition is skewed to low complexity over residues 263 to 277 (SQSSPSQQHSPINSY) and 285 to 305 (NTSTPSPSSSFQGRPPSTGFN). Pro residues predominate over residues 306-323 (TPPPPMSNNNNMPPPPPM). Residues 324–338 (QQNGGAANNRLSVHN) are compositionally biased toward polar residues. A compositionally biased stretch (pro residues) spans 346 to 365 (PAPPPPPPPPSAPAPPPPPM). The WH2 domain occupies 382–399 (ARSDLLSSIMQGMALKPA).

The protein belongs to the SCAR/WAVE family. As to quaternary structure, part of a Scar/WAVE complex containing brk1, scrA, abiA, pirA and napA. Interacts with brk1 and abiA.

It localises to the cytoplasm. It is found in the cytoskeleton. Its subcellular location is the cell projection. The protein localises to the pseudopodium tip. The protein resides in the filopodium tip. In terms of biological role, involved in regulation of actin and microtubule organization. Regulates phagocytosis and macropinocytosis. This Dictyostelium discoideum (Social amoeba) protein is Protein SCAR (scrA).